The following is a 355-amino-acid chain: Uroporphyrinogen decarboxylase (355 aa).

Substrate-binding positions include 27-31 (RQAGR), phenylalanine 46, aspartate 77, tyrosine 154, serine 209, and histidine 327.

It belongs to the uroporphyrinogen decarboxylase family. As to quaternary structure, homodimer.

The protein resides in the cytoplasm. It catalyses the reaction uroporphyrinogen III + 4 H(+) = coproporphyrinogen III + 4 CO2. Its pathway is porphyrin-containing compound metabolism; protoporphyrin-IX biosynthesis; coproporphyrinogen-III from 5-aminolevulinate: step 4/4. Its function is as follows. Catalyzes the decarboxylation of four acetate groups of uroporphyrinogen-III to yield coproporphyrinogen-III. This Nitrosomonas europaea (strain ATCC 19718 / CIP 103999 / KCTC 2705 / NBRC 14298) protein is Uroporphyrinogen decarboxylase.